The primary structure comprises 475 residues: Ribulose bisphosphate carboxylase large chain (475 aa).

The propeptide occupies 1–2; it reads MS. N-acetylproline is present on Pro-3. Lys-14 carries the post-translational modification N6,N6,N6-trimethyllysine. Residues Asn-123 and Thr-173 each coordinate substrate. Lys-175 acts as the Proton acceptor in catalysis. Position 177 (Lys-177) interacts with substrate. 3 residues coordinate Mg(2+): Lys-201, Asp-203, and Glu-204. Position 201 is an N6-carboxylysine (Lys-201). The active-site Proton acceptor is His-294. Substrate contacts are provided by Arg-295, His-327, and Ser-379.

Belongs to the RuBisCO large chain family. Type I subfamily. As to quaternary structure, heterohexadecamer of 8 large chains and 8 small chains; disulfide-linked. The disulfide link is formed within the large subunit homodimers. Mg(2+) is required as a cofactor. The disulfide bond which can form in the large chain dimeric partners within the hexadecamer appears to be associated with oxidative stress and protein turnover.

It is found in the plastid. Its subcellular location is the chloroplast. The enzyme catalyses 2 (2R)-3-phosphoglycerate + 2 H(+) = D-ribulose 1,5-bisphosphate + CO2 + H2O. The catalysed reaction is D-ribulose 1,5-bisphosphate + O2 = 2-phosphoglycolate + (2R)-3-phosphoglycerate + 2 H(+). Its function is as follows. RuBisCO catalyzes two reactions: the carboxylation of D-ribulose 1,5-bisphosphate, the primary event in carbon dioxide fixation, as well as the oxidative fragmentation of the pentose substrate in the photorespiration process. Both reactions occur simultaneously and in competition at the same active site. The protein is Ribulose bisphosphate carboxylase large chain of Pinus edulis (Pinyon pine).